The following is an 879-amino-acid chain: Leucine--tRNA ligase (879 aa).

A 'HIGH' region motif is present at residues 46–56; sequence PYPSGALHMGH. The short motif at 638-642 is the 'KMSKS' region element; that stretch reads KMSKS. Lysine 641 lines the ATP pocket.

The protein belongs to the class-I aminoacyl-tRNA synthetase family.

Its subcellular location is the cytoplasm. The enzyme catalyses tRNA(Leu) + L-leucine + ATP = L-leucyl-tRNA(Leu) + AMP + diphosphate. The protein is Leucine--tRNA ligase of Xanthomonas campestris pv. campestris (strain 8004).